The following is an 85-amino-acid chain: Large ribosomal subunit protein bL27 (85 aa).

It belongs to the bacterial ribosomal protein bL27 family.

The protein is Large ribosomal subunit protein bL27 of Pseudomonas aeruginosa (strain LESB58).